Reading from the N-terminus, the 207-residue chain is Large ribosomal subunit protein uL4 (207 aa).

The tract at residues 49–78 is disordered; it reads HAVKNRSAVSGGGRKPWRQKGTGRARQGSI.

The protein belongs to the universal ribosomal protein uL4 family. As to quaternary structure, part of the 50S ribosomal subunit.

One of the primary rRNA binding proteins, this protein initially binds near the 5'-end of the 23S rRNA. It is important during the early stages of 50S assembly. It makes multiple contacts with different domains of the 23S rRNA in the assembled 50S subunit and ribosome. Its function is as follows. Forms part of the polypeptide exit tunnel. This is Large ribosomal subunit protein uL4 from Streptococcus pneumoniae serotype 19F (strain G54).